The primary structure comprises 222 residues: Small ribosomal subunit protein uS3 (222 aa).

The KH type-2 domain occupies 39-107; sequence VREFLHKKLA…PVQINIEEVR (69 aa).

It belongs to the universal ribosomal protein uS3 family. In terms of assembly, part of the 30S ribosomal subunit. Forms a tight complex with proteins S10 and S14.

Binds the lower part of the 30S subunit head. Binds mRNA in the 70S ribosome, positioning it for translation. This is Small ribosomal subunit protein uS3 from Francisella tularensis subsp. tularensis (strain FSC 198).